A 1110-amino-acid polypeptide reads, in one-letter code: cGMP-specific 3',5'-cyclic phosphodiesterase (1110 aa).

2 stretches are compositionally biased toward low complexity: residues 1-25 and 35-55; these read MTDV…SSAS and TSTA…ASGA. Disordered regions lie at residues 1–55, 67–128, and 184–203; these read MTDV…ASGA, ISNQ…QQDV, and ASPT…SASS. Residues 88–103 are compositionally biased toward pro residues; the sequence is APYPPVPAAKPKPTPT. Residues 192-203 show a composition bias toward low complexity; that stretch reads SPRSLSNSSASS. 2 GAF domains span residues 233–385 and 417–601; these read DIDV…GIGI and NLEC…GLGI. The PDEase domain occupies 631–954; sequence SQDQTEKLTQ…RNWQDLAEKV (324 aa). His707 serves as the catalytic Proton donor. 4 residues coordinate a divalent metal cation: His711, His747, Asp748, and Asp858. Disordered stretches follow at residues 997–1028 and 1040–1110; these read AQHG…TGAL and LYNS…CSLL. Composition is skewed to basic and acidic residues over residues 1006 to 1015 and 1056 to 1068; these read DDSHTPEHQR and LESH…DDKS. The span at 1082–1097 shows a compositional bias: low complexity; it reads GRMSASSSTSSAGTVV. A compositionally biased stretch (basic residues) spans 1100-1110; that stretch reads SKKRSKLCSLL. Residue Cys1107 is modified to Cysteine methyl ester. A lipid anchor (S-farnesyl cysteine) is attached at Cys1107. Residues 1108 to 1110 constitute a propeptide, removed in mature form; it reads SLL.

This sequence belongs to the cyclic nucleotide phosphodiesterase family. As to quaternary structure, interacts with PrBP. A divalent metal cation serves as cofactor.

The protein localises to the cell membrane. The enzyme catalyses 3',5'-cyclic GMP + H2O = GMP + H(+). Has a role regulating cGMP transport in Malpighian tubule principal cells. The chain is cGMP-specific 3',5'-cyclic phosphodiesterase from Drosophila pseudoobscura pseudoobscura (Fruit fly).